Reading from the N-terminus, the 476-residue chain is Aspartyl/glutamyl-tRNA(Asn/Gln) amidotransferase subunit B (476 aa).

This sequence belongs to the GatB/GatE family. GatB subfamily. Heterotrimer of A, B and C subunits.

It carries out the reaction L-glutamyl-tRNA(Gln) + L-glutamine + ATP + H2O = L-glutaminyl-tRNA(Gln) + L-glutamate + ADP + phosphate + H(+). The enzyme catalyses L-aspartyl-tRNA(Asn) + L-glutamine + ATP + H2O = L-asparaginyl-tRNA(Asn) + L-glutamate + ADP + phosphate + 2 H(+). Its function is as follows. Allows the formation of correctly charged Asn-tRNA(Asn) or Gln-tRNA(Gln) through the transamidation of misacylated Asp-tRNA(Asn) or Glu-tRNA(Gln) in organisms which lack either or both of asparaginyl-tRNA or glutaminyl-tRNA synthetases. The reaction takes place in the presence of glutamine and ATP through an activated phospho-Asp-tRNA(Asn) or phospho-Glu-tRNA(Gln). The polypeptide is Aspartyl/glutamyl-tRNA(Asn/Gln) amidotransferase subunit B (Clostridium botulinum (strain Langeland / NCTC 10281 / Type F)).